Reading from the N-terminus, the 364-residue chain is MPGNTFGHVFRVTTWGESHGPAVGCTVDGCPAGLPLDVADIQRELDRRRVGQSRVSSQRREADEVQILSGVFEGRTTGTPITMLVYNTDAKSHHYENIKDRYRPGHADYTWDAKYGFRDWRGGGRSSARETIGRVAAGAVARRLLATFGITLVGYTLQLADLRAEVFDEAEIERNIMRCPDARVAALMVERVDQARRELDSLGGIVEVRARGVPPGLGEPVFDKLQADIGKAMFSIPAIKGVEIGEGFGVAMLRGSQNNDPFIRRDDGTIGTVSNHHGGILGGISTGEEIVVRLAAKPPASIAQPQQTVDRDGNPVTIEVHGRHDPTVLPRLVPVAEAMLALVLADHLLRQRLARVTWEDRSDD.

Residues arginine 48 and arginine 54 each contribute to the NADP(+) site. FMN-binding positions include 125–127, glycine 282, 297–301, and arginine 323; these read RSS and KPPAS.

The protein belongs to the chorismate synthase family. Homotetramer. FMNH2 is required as a cofactor.

The catalysed reaction is 5-O-(1-carboxyvinyl)-3-phosphoshikimate = chorismate + phosphate. It functions in the pathway metabolic intermediate biosynthesis; chorismate biosynthesis; chorismate from D-erythrose 4-phosphate and phosphoenolpyruvate: step 7/7. Functionally, catalyzes the anti-1,4-elimination of the C-3 phosphate and the C-6 proR hydrogen from 5-enolpyruvylshikimate-3-phosphate (EPSP) to yield chorismate, which is the branch point compound that serves as the starting substrate for the three terminal pathways of aromatic amino acid biosynthesis. This reaction introduces a second double bond into the aromatic ring system. The polypeptide is Chorismate synthase (Chloroflexus aurantiacus (strain ATCC 29366 / DSM 635 / J-10-fl)).